The following is a 474-amino-acid chain: 3-isopropylmalate dehydratase large subunit (474 aa).

[4Fe-4S] cluster contacts are provided by Cys355, Cys415, and Cys418.

This sequence belongs to the aconitase/IPM isomerase family. LeuC type 1 subfamily. In terms of assembly, heterodimer of LeuC and LeuD. [4Fe-4S] cluster serves as cofactor.

The catalysed reaction is (2R,3S)-3-isopropylmalate = (2S)-2-isopropylmalate. It participates in amino-acid biosynthesis; L-leucine biosynthesis; L-leucine from 3-methyl-2-oxobutanoate: step 2/4. In terms of biological role, catalyzes the isomerization between 2-isopropylmalate and 3-isopropylmalate, via the formation of 2-isopropylmaleate. The chain is 3-isopropylmalate dehydratase large subunit from Shewanella sp. (strain MR-7).